The sequence spans 283 residues: Formamidopyrimidine-DNA glycosylase (283 aa).

The Schiff-base intermediate with DNA role is filled by Pro-2. The active-site Proton donor is Glu-3. Lys-58 functions as the Proton donor; for beta-elimination activity in the catalytic mechanism. Residues His-100, Arg-119, and Arg-162 each coordinate DNA. The FPG-type zinc-finger motif lies at Arg-247–Arg-283. Arg-273 (proton donor; for delta-elimination activity) is an active-site residue.

The protein belongs to the FPG family. In terms of assembly, monomer. The cofactor is Zn(2+).

The enzyme catalyses Hydrolysis of DNA containing ring-opened 7-methylguanine residues, releasing 2,6-diamino-4-hydroxy-5-(N-methyl)formamidopyrimidine.. It catalyses the reaction 2'-deoxyribonucleotide-(2'-deoxyribose 5'-phosphate)-2'-deoxyribonucleotide-DNA = a 3'-end 2'-deoxyribonucleotide-(2,3-dehydro-2,3-deoxyribose 5'-phosphate)-DNA + a 5'-end 5'-phospho-2'-deoxyribonucleoside-DNA + H(+). In terms of biological role, involved in base excision repair of DNA damaged by oxidation or by mutagenic agents. Acts as a DNA glycosylase that recognizes and removes damaged bases. Has a preference for oxidized purines, such as 7,8-dihydro-8-oxoguanine (8-oxoG). Has AP (apurinic/apyrimidinic) lyase activity and introduces nicks in the DNA strand. Cleaves the DNA backbone by beta-delta elimination to generate a single-strand break at the site of the removed base with both 3'- and 5'-phosphates. This chain is Formamidopyrimidine-DNA glycosylase, found in Cereibacter sphaeroides (strain KD131 / KCTC 12085) (Rhodobacter sphaeroides).